The primary structure comprises 25 residues: Hemocyanin subunit 2 (25 aa).

It belongs to the tyrosinase family. Hemocyanin subfamily. In terms of tissue distribution, hemolymph.

It localises to the secreted. Its subcellular location is the extracellular space. Hemocyanins are copper-containing oxygen carriers occurring freely dissolved in the hemolymph of many mollusks and arthropods. The protein is Hemocyanin subunit 2 of Carcinus maenas (Common shore crab).